The following is a 155-amino-acid chain: Endoribonuclease YbeY (155 aa).

His114, His118, and His124 together coordinate Zn(2+).

This sequence belongs to the endoribonuclease YbeY family. Zn(2+) is required as a cofactor.

It localises to the cytoplasm. Single strand-specific metallo-endoribonuclease involved in late-stage 70S ribosome quality control and in maturation of the 3' terminus of the 16S rRNA. The polypeptide is Endoribonuclease YbeY (Salmonella arizonae (strain ATCC BAA-731 / CDC346-86 / RSK2980)).